Consider the following 152-residue polypeptide: Large ribosomal subunit protein bL9 (152 aa).

The protein belongs to the bacterial ribosomal protein bL9 family.

Binds to the 23S rRNA. The sequence is that of Large ribosomal subunit protein bL9 from Prochlorococcus marinus (strain MIT 9211).